We begin with the raw amino-acid sequence, 220 residues long: Uracil-DNA glycosylase (220 aa).

The active-site Proton acceptor is D61.

The protein belongs to the uracil-DNA glycosylase (UDG) superfamily. UNG family.

The protein localises to the cytoplasm. The enzyme catalyses Hydrolyzes single-stranded DNA or mismatched double-stranded DNA and polynucleotides, releasing free uracil.. In terms of biological role, excises uracil residues from the DNA which can arise as a result of misincorporation of dUMP residues by DNA polymerase or due to deamination of cytosine. This Glaesserella parasuis serovar 5 (strain SH0165) (Haemophilus parasuis) protein is Uracil-DNA glycosylase.